The sequence spans 446 residues: NADH-ubiquinone oxidoreductase chain 4 (446 aa).

The next 13 membrane-spanning stretches (helical) occupy residues 4-24 (IIFF…YWMV), 56-76 (MLSY…LLAS), 93-113 (IIIL…FMFY), 114-134 (LFFE…GYQP), 139-159 (AGLY…IGIF), 182-202 (LLYF…LVHL), 218-238 (ILAG…ISFL), 245-265 (YSFV…LVCL), 272-292 (ALIA…LLTM), 297-317 (LCGS…LFCL), 330-350 (MLIN…WFLL), 373-393 (IVSW…FSAA), and 426-446 (LLHW…MLWL).

This sequence belongs to the complex I subunit 4 family.

The protein localises to the mitochondrion membrane. The enzyme catalyses a ubiquinone + NADH + 5 H(+)(in) = a ubiquinol + NAD(+) + 4 H(+)(out). In terms of biological role, core subunit of the mitochondrial membrane respiratory chain NADH dehydrogenase (Complex I) that is believed to belong to the minimal assembly required for catalysis. Complex I functions in the transfer of electrons from NADH to the respiratory chain. The immediate electron acceptor for the enzyme is believed to be ubiquinone. This is NADH-ubiquinone oxidoreductase chain 4 (mt:ND4) from Drosophila melanogaster (Fruit fly).